We begin with the raw amino-acid sequence, 321 residues long: Cytochrome c biogenesis protein CcsA (321 aa).

A run of 7 helical transmembrane segments spans residues 9 to 29 (ILTH…LITL), 44 to 64 (GMIA…ASSG), 68 to 88 (LSNL…LHMI), 143 to 163 (MLLS…LLMI), 226 to 246 (VISL…VWAN), 260 to 274 (TWAF…IYLH), and 289 to 309 (VASI…LLGI).

This sequence belongs to the CcmF/CycK/Ccl1/NrfE/CcsA family. May interact with Ccs1.

It is found in the plastid. The protein localises to the chloroplast thylakoid membrane. Required during biogenesis of c-type cytochromes (cytochrome c6 and cytochrome f) at the step of heme attachment. The protein is Cytochrome c biogenesis protein CcsA of Oryza sativa subsp. indica (Rice).